The primary structure comprises 335 residues: MLALGKLLELTLTDHEPAEKTQVTPKGARLRWLGEGALEVRPAESDDCGLDLLLSAGIHGNETAPIELLERLLHGVANGKIRPRARVLFLFGNPAAIRKGERFIEQDINRLFNGRHELSSGFEALRAAELEQFARVFFSKPGRNRLHYDLHTAIRGSKIEQFALYPYKEGRKHSRRELARLAAAGMEAVLLQSKSSITFSAFTYEQLEAEAFTLELGKARPFGQNEQVNLDKLEERLIRIIEATEPEDESSLDGLQLFSVSREIIKHSDSFHLHLPADIENFSELSKGYLLAEDLAEMRWVVEEEGARIIFPNPKVKNGLRAGILIVPDSGQRLG.

The Zn(2+) site is built by His-59, Glu-62, and His-151. The active site involves Glu-215.

The protein belongs to the AspA/AstE family. Succinylglutamate desuccinylase subfamily. The cofactor is Zn(2+).

The catalysed reaction is N-succinyl-L-glutamate + H2O = L-glutamate + succinate. Its pathway is amino-acid degradation; L-arginine degradation via AST pathway; L-glutamate and succinate from L-arginine: step 5/5. Functionally, transforms N(2)-succinylglutamate into succinate and glutamate. The polypeptide is Succinylglutamate desuccinylase (Pseudomonas putida (strain ATCC 47054 / DSM 6125 / CFBP 8728 / NCIMB 11950 / KT2440)).